The sequence spans 167 residues: SsrA-binding protein (167 aa).

A compositionally biased stretch (basic and acidic residues) spans Gln139–Arg158. The tract at residues Gln139–Ala167 is disordered.

This sequence belongs to the SmpB family.

The protein resides in the cytoplasm. Required for rescue of stalled ribosomes mediated by trans-translation. Binds to transfer-messenger RNA (tmRNA), required for stable association of tmRNA with ribosomes. tmRNA and SmpB together mimic tRNA shape, replacing the anticodon stem-loop with SmpB. tmRNA is encoded by the ssrA gene; the 2 termini fold to resemble tRNA(Ala) and it encodes a 'tag peptide', a short internal open reading frame. During trans-translation Ala-aminoacylated tmRNA acts like a tRNA, entering the A-site of stalled ribosomes, displacing the stalled mRNA. The ribosome then switches to translate the ORF on the tmRNA; the nascent peptide is terminated with the 'tag peptide' encoded by the tmRNA and targeted for degradation. The ribosome is freed to recommence translation, which seems to be the essential function of trans-translation. This chain is SsrA-binding protein, found in Xanthomonas oryzae pv. oryzae (strain MAFF 311018).